A 482-amino-acid chain; its full sequence is UDP-N-acetylmuramate--L-alanine ligase (482 aa).

Glycine 123 to threonine 129 is an ATP binding site.

The protein belongs to the MurCDEF family.

Its subcellular location is the cytoplasm. It carries out the reaction UDP-N-acetyl-alpha-D-muramate + L-alanine + ATP = UDP-N-acetyl-alpha-D-muramoyl-L-alanine + ADP + phosphate + H(+). It functions in the pathway cell wall biogenesis; peptidoglycan biosynthesis. Its function is as follows. Cell wall formation. This is UDP-N-acetylmuramate--L-alanine ligase from Pseudomonas entomophila (strain L48).